The sequence spans 95 residues: MALKPLHDRVLVRRTESEEKTAGGLIIPDSAKEKPSEGVVVACGEGARKDSGELIAMAVKEGDNILFGKWSGTEVTVDGEELLMMKESDIMGVIV.

The protein belongs to the GroES chaperonin family. As to quaternary structure, heptamer of 7 subunits arranged in a ring. Interacts with the chaperonin GroEL.

It is found in the cytoplasm. Its function is as follows. Together with the chaperonin GroEL, plays an essential role in assisting protein folding. The GroEL-GroES system forms a nano-cage that allows encapsulation of the non-native substrate proteins and provides a physical environment optimized to promote and accelerate protein folding. GroES binds to the apical surface of the GroEL ring, thereby capping the opening of the GroEL channel. This is Co-chaperonin GroES from Ruegeria sp. (strain TM1040) (Silicibacter sp.).